Here is a 1291-residue protein sequence, read N- to C-terminus: Ethylene-insensitive protein 2.2 (1291 aa).

6 consecutive transmembrane segments (helical) span residues 18–38 (ALPA…PGKW), 48–68 (FGFD…LCQY), 96–116 (FLGV…ILGI), 128–148 (LSTC…FATL), 155–175 (SFLS…GVLI), and 195–215 (SAFA…FFLH). An N-linked (GlcNAc...) asparagine glycan is attached at N227. 7 consecutive transmembrane segments (helical) span residues 231 to 251 (GALC…IYLV), 253 to 273 (YVLM…LLTF), 288 to 308 (VALC…ALTW), 335 to 355 (IIAV…GIYQ), 356 to 376 (LLIF…IPLF), 393 to 413 (FLEF…IIFV), and 441 to 461 (VLLI…ATPL). Positions 498–518 (TEEESIGGQEQLSGPGKSAES) are disordered. N550 is a glycosylation site (N-linked (GlcNAc...) asparagine). Positions 614–662 (AEKEDDEGDSWEPEESSKGVPGSTSSLTSDGPGSFRSLSGKSDEGGNGA) are disordered. Residues 617–627 (EDDEGDSWEPE) show a composition bias toward acidic residues. The span at 635-653 (GSTSSLTSDGPGSFRSLSG) shows a compositional bias: polar residues. 2 positions are modified to phosphoserine: S647 and S664. Disordered stretches follow at residues 742–768 (QIHS…GGQR) and 787–808 (GPSR…TLPS). Residues 759-768 (NIDSSYGGQR) show a composition bias toward polar residues. Residue T818 is modified to Phosphothreonine. The tract at residues 836 to 856 (GSSSLNGQMDSPAPISPSLGP) is disordered. N891 carries N-linked (GlcNAc...) asparagine glycosylation. The residue at position 923 (S923) is a Phosphoserine. N1027 carries an N-linked (GlcNAc...) asparagine glycan. A disordered region spans residues 1210-1229 (HRSSPPVSNGMLPPASKPGR). The short motif at 1262-1269 (DVAFPKGK) is the Nuclear localization signal element.

The protein belongs to the NRAMP (TC 2.A.55) family.

Its subcellular location is the endoplasmic reticulum membrane. It is found in the nucleus. The protein localises to the cytoplasm. Its function is as follows. Central factor in signaling pathways regulated by ethylene (ET) and involved in various processes including development, plant defense, senescence, nucleotide sugar flux, and tropisms. In terms of biological role, trafficking signal inducing ethylene response. The nuclear localization is both necessary and sufficient to activate EIN3-mediated transcription and ethylene responses. The protein is Ethylene-insensitive protein 2.2 of Populus trichocarpa (Western balsam poplar).